We begin with the raw amino-acid sequence, 505 residues long: Glycerol kinase 1 (505 aa).

Position 13 (Thr-13) interacts with ADP. Thr-13, Thr-14, and Ser-15 together coordinate ATP. Residue Thr-13 participates in sn-glycerol 3-phosphate binding. Position 17 (Arg-17) interacts with ADP. The sn-glycerol 3-phosphate site is built by Arg-83, Glu-84, and Tyr-135. Glycerol-binding residues include Arg-83, Glu-84, and Tyr-135. The residue at position 231 (His-231) is a Phosphohistidine; by HPr. Asp-245 provides a ligand contact to sn-glycerol 3-phosphate. Residues Asp-245 and Gln-246 each coordinate glycerol. Thr-267 and Gly-310 together coordinate ADP. Residues Thr-267, Gly-310, Gln-314, and Gly-411 each coordinate ATP. ADP contacts are provided by Gly-411 and Asn-415.

It belongs to the FGGY kinase family. In terms of assembly, homotetramer and homodimer (in equilibrium). Post-translationally, the phosphoenolpyruvate-dependent sugar phosphotransferase system (PTS), including enzyme I, and histidine-containing protein (HPr) are required for the phosphorylation, which leads to the activation of the enzyme.

It carries out the reaction glycerol + ATP = sn-glycerol 3-phosphate + ADP + H(+). It participates in polyol metabolism; glycerol degradation via glycerol kinase pathway; sn-glycerol 3-phosphate from glycerol: step 1/1. Activated by phosphorylation and inhibited by fructose 1,6-bisphosphate (FBP). Functionally, key enzyme in the regulation of glycerol uptake and metabolism. Catalyzes the phosphorylation of glycerol to yield sn-glycerol 3-phosphate. The protein is Glycerol kinase 1 of Lactiplantibacillus plantarum (strain ATCC BAA-793 / NCIMB 8826 / WCFS1) (Lactobacillus plantarum).